Here is a 268-residue protein sequence, read N- to C-terminus: Calpain small subunit 1 (268 aa).

Met-1 carries the post-translational modification N-acetylmethionine. At Ser-6 the chain carries Phosphoserine. The 35-residue stretch at 96-130 (EEVRQFRKLFVQLAGDDMEVSATELMNILNKVVTR) folds into the EF-hand 1; atypical domain. Ala-109, Asp-112, Glu-114, Glu-119, Asp-137, Asp-152, Asp-154, Thr-156, Lys-158, and Glu-163 together coordinate Ca(2+). EF-hand domains are found at residues 139–172 (FGID…NNIK), 169–204 (NNIK…AGFH), 205–233 (LNEH…ISCL), and 234–268 (VRLD…TMYS). Residue Lys-179 is modified to N6-acetyllysine. Residues Asp-182, Asp-184, Ser-186, Thr-188, Glu-193, and Asp-225 each contribute to the Ca(2+) site.

In terms of assembly, homodimer or heterodimer of a large (catalytic) and a small (regulatory) subunit. In presence of calcium, the heterodimer dissociates.

The protein resides in the cytoplasm. Its subcellular location is the cell membrane. Its function is as follows. Regulatory subunit of the calcium-regulated non-lysosomal thiol-protease which catalyzes limited proteolysis of substrates involved in cytoskeletal remodeling and signal transduction. Essential for embryonic development. The sequence is that of Calpain small subunit 1 (Capns1) from Mus musculus (Mouse).